Here is an 857-residue protein sequence, read N- to C-terminus: RNA-directed RNA polymerase 2a (857 aa).

The RdRp catalytic domain occupies 511-624; it reads KHCLEIDLSK…FSLLPPVGDP (114 aa). A compositionally biased stretch (basic and acidic residues) spans 780 to 789; the sequence is IERRCNDKRR. The segment at 780–827 is disordered; that stretch reads IERRCNDKRRTPTGSYGGGEEAETKVSQTESTGTRSQKSQRESAFKSQ. The segment covering 804–816 has biased composition (polar residues); that stretch reads KVSQTESTGTRSQ.

This sequence belongs to the ssRNA positive-strand viruses RNA-directed RNA polymerase family. Interacts with replication protein 1a.

It catalyses the reaction RNA(n) + a ribonucleoside 5'-triphosphate = RNA(n+1) + diphosphate. Its function is as follows. RNA-dependent RNA polymerase which replicates the viral genome composed of 3 RNA segments, RNA1, RNA2 and RNA3. This Cucumber mosaic virus (strain FNY) (CMV) protein is RNA-directed RNA polymerase 2a.